Consider the following 311-residue polypeptide: Ribonuclease 3 (311 aa).

An RNase III domain is found at 20–145 (YLCFYRILGF…FIGAIYLDQG (126 aa)). Glu-62 is a binding site for Mg(2+). Asp-66 is an active-site residue. Positions 131 and 134 each coordinate Mg(2+). Residue Glu-134 is part of the active site. One can recognise a DRBM domain in the interval 173-242 (NFKSKLIEWS…AQMAIKKVKD (70 aa)). The tract at residues 250 to 311 (NEAKSQHSKP…EVEATETEKE (62 aa)) is disordered. Over residues 262–288 (VETESVEPELTESETMEPDTLETEAPE) the composition is skewed to acidic residues.

This sequence belongs to the ribonuclease III family. In terms of assembly, homodimer. Mg(2+) is required as a cofactor.

Its subcellular location is the cytoplasm. It catalyses the reaction Endonucleolytic cleavage to 5'-phosphomonoester.. Digests double-stranded RNA. Involved in the processing of primary rRNA transcript to yield the immediate precursors to the large and small rRNAs (23S and 16S). Processes some mRNAs, and tRNAs when they are encoded in the rRNA operon. Processes pre-crRNA and tracrRNA of type II CRISPR loci if present in the organism. This chain is Ribonuclease 3, found in Bacteroides thetaiotaomicron (strain ATCC 29148 / DSM 2079 / JCM 5827 / CCUG 10774 / NCTC 10582 / VPI-5482 / E50).